A 388-amino-acid polypeptide reads, in one-letter code: Putrescine N-methyltransferase 1 (388 aa).

3 stretches are compositionally biased toward polar residues: residues 1 to 14 (MEVISTNTNGSTIF), 23 to 39 (GYQNGTSKHQNGHQNGT), and 46 to 88 (HQNG…GNEL). Residues 1–88 (MEVISTNTNG…TISHDNGNEL (88 aa)) are disordered. Positions 99–336 (PGWFSEFSAL…GVIGYMLCST (238 aa)) constitute a PABS domain. Residues Gln-130, Glu-205, and 236–237 (DG) each bind S-adenosyl-L-methionine. Asp-255 serves as the catalytic Proton acceptor. Tyr-324 contributes to the S-adenosyl-L-methionine binding site.

It belongs to the class I-like SAM-binding methyltransferase superfamily. Spermidine/spermine synthase family. As to expression, mainly expressed in roots.

It catalyses the reaction putrescine + S-adenosyl-L-methionine = N-methylputrescine + S-adenosyl-L-homocysteine + H(+). It functions in the pathway alkaloid biosynthesis; nicotine biosynthesis. In terms of biological role, involved in the biosynthesis of pyridine alkaloid natural products, leading mainly to the production of anabasine, anatabine, nicotine and nornicotine, effective deterrents against herbivores with antiparasitic and pesticide properties (neurotoxins); nornicotine serves as the precursor in the synthesis of the carcinogen compound N'-nitrosonornicotine (NNN). Methyltransferase that mediates the conversion of putrescine to N-methylputrescine. This Nicotiana attenuata (Coyote tobacco) protein is Putrescine N-methyltransferase 1.